The sequence spans 197 residues: Guanylate kinase (197 aa).

The 178-residue stretch at Gly-10–Ile-187 folds into the Guanylate kinase-like domain. Ala-17–Thr-24 contacts ATP.

This sequence belongs to the guanylate kinase family.

It localises to the cytoplasm. The enzyme catalyses GMP + ATP = GDP + ADP. Essential for recycling GMP and indirectly, cGMP. This chain is Guanylate kinase, found in Protochlamydia amoebophila (strain UWE25).